We begin with the raw amino-acid sequence, 360 residues long: ACT1-like protein (360 aa).

Residues 339-360 (KKQSHNNANDHHEDSMNYSITQ) are disordered.

In terms of assembly, interacts with the receptor complex composed of ilcr-1 and ilcr-2. Also interacts with pik-1. As to expression, expressed in neurons.

Its function is as follows. May act as an adapter to facilitate downstream signaling for the receptor complex composed of ilcr-1 and ilcr-2, which is a signaling complex that modulates neuronal activity and animal behavior in response to sensory neuron input. This Caenorhabditis elegans protein is ACT1-like protein.